We begin with the raw amino-acid sequence, 163 residues long: Glycine cleavage system H-like protein gcvH5, mitochondrial (163 aa).

The transit peptide at 1–23 (MFLFKTTNNLRKSLSNKFFCTRY) directs the protein to the mitochondrion. Residues 50–136 (IGTLGLTENG…MSKGWLCKIK (87 aa)) form the Lipoyl-binding domain.

This sequence belongs to the GcvH family.

Its subcellular location is the mitochondrion. The chain is Glycine cleavage system H-like protein gcvH5, mitochondrial (gcvH5) from Dictyostelium discoideum (Social amoeba).